Reading from the N-terminus, the 2185-residue chain is Genome polyprotein (2185 aa).

Glycine 2 carries the N-myristoyl glycine; by host lipid modification. The Cytoplasmic portion of the chain corresponds to 2–1495; it reads GAQVSTQKTG…HVSRAFICLQ (1494 aa). The tract at residues 566-582 is amphipathic alpha-helix; sequence FYQGPPGEAVERAIARV. Catalysis depends on for protease 2A activity residues histidine 872 and aspartate 890. Zn(2+) contacts are provided by cysteine 907 and cysteine 909. Cysteine 961 serves as the catalytic For protease 2A activity. Zn(2+) is bound by residues cysteine 967 and histidine 969. The membrane-binding stretch occupies residues 1101 to 1173; sequence NNNWLKKFTE…EQSAPSQSDQ (73 aa). The oligomerization stretch occupies residues 1101–1239; sequence NNNWLKKFTE…SPGAGKSVAT (139 aa). Positions 1122–1126 are RNA-binding; the sequence is AVKIQ. The 157-residue stretch at 1205 to 1361 folds into the SF3 helicase domain; it reads EKKMSNYIQF…SMYSQNGKIN (157 aa). Residues cysteine 1369, cysteine 1381, and cysteine 1386 each contribute to the Zn(2+) site. The C4-type; degenerate zinc-finger motif lies at 1369 to 1386; it reads CDEECCPVNFKRCCPLVC. An RNA-binding region spans residues 1413-1420; sequence EYNHRHSV. Residues 1424 to 1429 form an oligomerization region; that stretch reads LEALFQ. An intramembrane segment occupies 1496–1511; it reads ALTTFVSVAGIIYIIY. Residues 1512 to 2185 are Cytoplasmic-facing; sequence KLFAGFQGAY…TLRRKWLDSF (674 aa). Tyrosine 1521 carries the O-(5'-phospho-RNA)-tyrosine modification. Positions 1541-1719 constitute a Peptidase C3 domain; it reads GPAFEFAVAM…FSAALLKHYF (179 aa). Residues histidine 1580, glutamate 1611, and cysteine 1687 each act as for protease 3C activity in the active site. Residues 1950-2066 enclose the RdRp catalytic domain; it reads GHLIAFDYSG…SYPWPIDASL (117 aa). The Mg(2+) site is built by aspartate 1956 and aspartate 2052.

The protein belongs to the picornaviruses polyprotein family. In terms of assembly, interacts with capsid protein VP1 and capsid protein VP3 to form heterotrimeric protomers. As to quaternary structure, interacts with capsid protein VP0, and capsid protein VP3 to form heterotrimeric protomers. Five protomers subsequently associate to form pentamers which serve as building blocks for the capsid. Interacts with capsid protein VP2, capsid protein VP3 and capsid protein VP4 following cleavage of capsid protein VP0. Interacts with capsid protein VP1 and capsid protein VP3 in the mature capsid. In terms of assembly, interacts with capsid protein VP0 and capsid protein VP1 to form heterotrimeric protomers. Five protomers subsequently associate to form pentamers which serve as building blocks for the capsid. Interacts with capsid protein VP4 in the mature capsid. Interacts with protein 2C; this interaction may be important for virion morphogenesis. As to quaternary structure, interacts with capsid protein VP1 and capsid protein VP3. Homodimer. In terms of assembly, homohexamer; forms a hexameric ring structure with 6-fold symmetry characteristic of AAA+ ATPases. Interacts (via N-terminus) with host RTN3 (via reticulon domain); this interaction is important for viral replication. Interacts with capsid protein VP3; this interaction may be important for virion morphogenesis. As to quaternary structure, interacts with protein 3CD. Homodimer. Interacts with host GBF1. Interacts (via GOLD domain) with host ACBD3 (via GOLD domain); this interaction allows the formation of a viral protein 3A/ACBD3 heterotetramer with a 2:2 stoichiometry, which will stimulate the recruitment of host PI4KB in order to synthesize PI4P at the viral RNA replication sites. In terms of assembly, interacts with RNA-directed RNA polymerase. As to quaternary structure, interacts with protein 3AB and with RNA-directed RNA polymerase. Interacts with Viral protein genome-linked and with protein 3CD. Requires Mg(2+) as cofactor. In terms of processing, specific enzymatic cleavages in vivo by the viral proteases yield processing intermediates and the mature proteins. Post-translationally, myristoylation is required for the formation of pentamers during virus assembly. Further assembly of 12 pentamers and a molecule of genomic RNA generates the provirion. During virion maturation, immature virions are rendered infectious following cleavage of VP0 into VP4 and VP2. This maturation seems to be an autocatalytic event triggered by the presence of RNA in the capsid and it is followed by a conformational change infectious virion. In terms of processing, myristoylation is required during RNA encapsidation and formation of the mature virus particle. Post-translationally, VPg is uridylylated by the polymerase into VPg-pUpU. This acts as a nucleotide-peptide primer for the genomic RNA replication.

The protein resides in the virion. The protein localises to the host cytoplasm. It localises to the host cytoplasmic vesicle membrane. It is found in the host nucleus. It catalyses the reaction a ribonucleoside 5'-triphosphate + H2O = a ribonucleoside 5'-diphosphate + phosphate + H(+). It carries out the reaction Selective cleavage of Tyr-|-Gly bond in the picornavirus polyprotein.. The enzyme catalyses RNA(n) + a ribonucleoside 5'-triphosphate = RNA(n+1) + diphosphate. The catalysed reaction is Selective cleavage of Gln-|-Gly bond in the poliovirus polyprotein. In other picornavirus reactions Glu may be substituted for Gln, and Ser or Thr for Gly.. Replication or transcription is subject to high level of random mutations by the nucleotide analog ribavirin. In terms of biological role, forms an icosahedral capsid of pseudo T=3 symmetry with capsid proteins VP2 and VP3. The capsid is 300 Angstroms in diameter, composed of 60 copies of each capsid protein and enclosing the viral positive strand RNA genome. Capsid protein VP1 mainly forms the vertices of the capsid. Capsid protein VP1 interacts with host cell receptor to provide virion attachment to target host cells. This attachment induces virion internalization. Tyrosine kinases are probably involved in the entry process. After binding to its receptor, the capsid undergoes conformational changes. Capsid protein VP1 N-terminus (that contains an amphipathic alpha-helix) and capsid protein VP4 are externalized. Together, they shape a pore in the host membrane through which viral genome is translocated to host cell cytoplasm. Forms an icosahedral capsid of pseudo T=3 symmetry with capsid proteins VP2 and VP3. The capsid is 300 Angstroms in diameter, composed of 60 copies of each capsid protein and enclosing the viral positive strand RNA genome. Functionally, lies on the inner surface of the capsid shell. After binding to the host receptor, the capsid undergoes conformational changes. Capsid protein VP4 is released, Capsid protein VP1 N-terminus is externalized, and together, they shape a pore in the host membrane through which the viral genome is translocated into the host cell cytoplasm. Its function is as follows. Component of immature procapsids, which is cleaved into capsid proteins VP4 and VP2 after maturation. Allows the capsid to remain inactive before the maturation step. In terms of biological role, cysteine protease that cleaves viral polyprotein and specific host proteins. It is responsible for the autocatalytic cleavage between the P1 and P2 regions, which is the first cleavage occurring in the polyprotein. Also cleaves the host translation initiation factor EIF4G1, in order to shut down the capped cellular mRNA translation. Inhibits the host nucleus-cytoplasm protein and RNA trafficking by cleaving host members of the nuclear pores. Counteracts stress granule formation probably by antagonizing its assembly or promoting its dissassembly. Cleaves and inhibits host IFIH1/MDA5, thereby inhibiting the type-I IFN production and the establishment of the antiviral state. Cleaves and inhibits host MAVS, thereby inhibiting the type-I IFN production and the establishment of the antiviral state. Plays an essential role in the virus replication cycle by acting as a viroporin. Creates a pore in the host endoplasmic reticulum and as a consequence releases Ca2+ in the cytoplasm of infected cell. In turn, high levels of cytoplasmic calcium may trigger membrane trafficking and transport of viral ER-associated proteins to viroplasms, sites of viral genome replication. Functionally, induces and associates with structural rearrangements of intracellular membranes. Displays RNA-binding, nucleotide binding and NTPase activities. May play a role in virion morphogenesis and viral RNA encapsidation by interacting with the capsid protein VP3. Its function is as follows. Localizes the viral replication complex to the surface of membranous vesicles. Together with protein 3CD binds the Cis-Active RNA Element (CRE) which is involved in RNA synthesis initiation. Acts as a cofactor to stimulate the activity of 3D polymerase, maybe through a nucleid acid chaperone activity. In terms of biological role, localizes the viral replication complex to the surface of membranous vesicles. It inhibits host cell endoplasmic reticulum-to-Golgi apparatus transport and causes the disassembly of the Golgi complex, possibly through GBF1 interaction. This would result in depletion of MHC, trail receptors and IFN receptors at the host cell surface. Plays an essential role in viral RNA replication by recruiting ACBD3 and PI4KB at the viral replication sites, thereby allowing the formation of the rearranged membranous structures where viral replication takes place. Acts as a primer for viral RNA replication and remains covalently bound to viral genomic RNA. VPg is uridylylated prior to priming replication into VPg-pUpU. The oriI viral genomic sequence may act as a template for this. The VPg-pUpU is then used as primer on the genomic RNA poly(A) by the RNA-dependent RNA polymerase to replicate the viral genome. During genome replication, the VPg-RNA linkage is removed by the host TDP2, thereby accelerating replication. During the late stage of the replication cycle, host TDP2 is excluded from sites of viral RNA synthesis and encapsidation, allowing for the generation of progeny virions. Functionally, involved in the viral replication complex and viral polypeptide maturation. It exhibits protease activity with a specificity and catalytic efficiency that is different from protease 3C. Protein 3CD lacks polymerase activity. Protein 3CD binds to the 5'UTR of the viral genome. Its function is as follows. Replicates the viral genomic RNA on the surface of intracellular membranes. May form linear arrays of subunits that propagate along a strong head-to-tail interaction called interface-I. Covalently attaches UMP to a tyrosine of VPg, which is used to prime RNA synthesis. The positive stranded RNA genome is first replicated at virus induced membranous vesicles, creating a dsRNA genomic replication form. This dsRNA is then used as template to synthesize positive stranded RNA genomes. ss(+)RNA genomes are either translated, replicated or encapsidated. In terms of biological role, major viral protease that mediates proteolytic processing of the polyprotein. Cleaves host EIF5B, contributing to host translation shutoff. Also cleaves host PABPC1, contributing to host translation shutoff. Cleaves host NLRP1, triggers host N-glycine-mediated degradation of the autoinhibitory NLRP1 N-terminal fragment. This Homo sapiens (Human) protein is Genome polyprotein.